A 977-amino-acid polypeptide reads, in one-letter code: SLIT and NTRK-like protein 3 (977 aa).

A signal peptide spans 1 to 26; the sequence is MKPSIAEMLHRGRMLWIILLSTIALG. The Extracellular portion of the chain corresponds to 29-654; that stretch reads TPIPLIEDSE…SPPGGPVPLS (626 aa). Residue asparagine 68 is glycosylated (N-linked (GlcNAc...) asparagine). LRR repeat units follow at residues 78-99, 102-123, 126-147, 150-171, 174-195, and 197-218; these read RPFKLYLQRNSMRKLYTNSFLH, NAVSINLGNNALQDIQTGAFNG, ILKRLYLHENKLDVFRNDTFLG, SLEYLQADYNVIKRIESGAFRN, KLRVLILNDNLIPMLPTNLFKA, and SLTHLDLRGNRLKVLFYRGMLD. In terms of domain architecture, LRRCT 1 spans 232–283; it reads NPWNCTCEIVQLKSWLERIPYTALVGDITCETPFHFHGKDLREIRKTELCPL. The disordered stretch occupies residues 325 to 360; that stretch reads EYKSSNKQPKPTKQPRTPRPPSTSQALYPGPNQPPI. In terms of domain architecture, LRRNT spans 364 to 406; it reads QTRPPIPIICPTGCTCNLHINDLGLTVNCKERGFNNISELLPR. LRR repeat units lie at residues 409–430, 433–454, 457–478, 481–502, 505–526, and 528–549; these read NAKKLYLSSNLIQKIYRSDFWN, SLDLLHLGNNRISYVQDGAFIN, NLKSLFLNGNDIEKLTPGMFRG, SLHYLYFEFNVIREIQPAAFSL, NLKLLFLNNNLLRTLPTDAFAG, and SLARLNLRKNYFLYLPVAGVLE. The LRRCT 2 domain occupies 562 to 613; it reads NPWDCTCDLVPFKQWIETISSVSVVGDVLCRSPENLTHRDVRTIELEVLCPE. N-linked (GlcNAc...) asparagine glycosylation is present at asparagine 596. The chain crosses the membrane as a helical span at residues 655 to 675; that stretch reads VLILSLLVLFFSAVFVAAGLF. Residues 676-977 lie on the Cytoplasmic side of the membrane; sequence AYVLRRRRKK…EVLEKTTYRF (302 aa). Disordered regions lie at residues 708–735 and 761–790; these read LFEDGGGGGGGSGGGGRPTLSSPEKAPP and EEEVAVSSAQEAGSAERGGPGTQPPGMGEA. The span at 711-724 shows a compositional bias: gly residues; sequence DGGGGGGGSGGGGR. Residues 765-775 are compositionally biased toward low complexity; it reads AVSSAQEAGSA.

It belongs to the SLITRK family. In terms of tissue distribution, expressed in the occipital lobe of the cerebral cortex of the brain. Expressed at higher levels in some astrocytic brain tumors such as astrocytomas, oligodendrogliomas, glioblastomas, gangliogliomas and primitive neuroectodermal tumors.

It localises to the membrane. Its function is as follows. Suppresses neurite outgrowth. The protein is SLIT and NTRK-like protein 3 (SLITRK3) of Homo sapiens (Human).